The following is a 115-amino-acid chain: Parathyroid hormone (115 aa).

The signal sequence occupies residues 1-25 (MIPAKDMAKVMIVMLAICFLTKSDG). The propeptide occupies 26–31 (KSVKKR). Residues 51-69 (RVEWLRKKLQDVHNFIALG) are important for receptor binding. The tract at residues 72–96 (LAPRDAGSQRPRKKEDNILVESHEK) is disordered. The span at 84-96 (KKEDNILVESHEK) shows a compositional bias: basic and acidic residues.

The protein belongs to the parathyroid hormone family. As to quaternary structure, interacts with PTH1R (via N-terminal extracellular domain).

The protein localises to the secreted. Its function is as follows. Parathyroid hormone elevates calcium level by dissolving the salts in bone and preventing their renal excretion. Acts by binding to its receptor, PTH1R, activating G protein-coupled receptor signaling. Stimulates [1-14C]-2-deoxy-D-glucose (2DG) transport and glycogen synthesis in osteoblastic cells. In Macaca fascicularis (Crab-eating macaque), this protein is Parathyroid hormone (PTH).